Reading from the N-terminus, the 574-residue chain is Aspartate--tRNA ligase (574 aa).

L-aspartate is bound at residue Glu-169. Residues 193–196 are aspartate; the sequence is QLFK. Arg-215 serves as a coordination point for L-aspartate. ATP contacts are provided by residues 215–217 and Gln-224; that span reads RDE. His-437 is a binding site for L-aspartate. Glu-471 provides a ligand contact to ATP. L-aspartate is bound at residue Arg-478. ATP is bound at residue 523 to 526; that stretch reads GLDR.

This sequence belongs to the class-II aminoacyl-tRNA synthetase family. Type 1 subfamily. In terms of assembly, homodimer.

The protein resides in the cytoplasm. It catalyses the reaction tRNA(Asp) + L-aspartate + ATP = L-aspartyl-tRNA(Asp) + AMP + diphosphate. Functionally, catalyzes the attachment of L-aspartate to tRNA(Asp) in a two-step reaction: L-aspartate is first activated by ATP to form Asp-AMP and then transferred to the acceptor end of tRNA(Asp). This is Aspartate--tRNA ligase from Mycoplasma mycoides subsp. mycoides SC (strain CCUG 32753 / NCTC 10114 / PG1).